The following is a 119-amino-acid chain: Large ribosomal subunit protein bL20 (119 aa).

This sequence belongs to the bacterial ribosomal protein bL20 family.

Functionally, binds directly to 23S ribosomal RNA and is necessary for the in vitro assembly process of the 50S ribosomal subunit. It is not involved in the protein synthesizing functions of that subunit. This chain is Large ribosomal subunit protein bL20, found in Streptococcus agalactiae serotype Ia (strain ATCC 27591 / A909 / CDC SS700).